The primary structure comprises 339 residues: Ketol-acid reductoisomerase (NADP(+)) (339 aa).

The KARI N-terminal Rossmann domain occupies 1 to 182 (MRVYYDRDAD…GGGRAGIIET (182 aa)). NADP(+) is bound by residues 24–27 (YGSQ), arginine 48, serine 51, serine 53, and 83–86 (DELQ). Histidine 108 is an active-site residue. Position 134 (glycine 134) interacts with NADP(+). A KARI C-terminal knotted domain is found at 183-328 (TFKEECETDL…ERLRAMMPWI (146 aa)). Residues aspartate 191, glutamate 195, glutamate 227, and glutamate 231 each contribute to the Mg(2+) site. Position 252 (serine 252) interacts with substrate.

Belongs to the ketol-acid reductoisomerase family. Mg(2+) serves as cofactor.

The catalysed reaction is (2R)-2,3-dihydroxy-3-methylbutanoate + NADP(+) = (2S)-2-acetolactate + NADPH + H(+). The enzyme catalyses (2R,3R)-2,3-dihydroxy-3-methylpentanoate + NADP(+) = (S)-2-ethyl-2-hydroxy-3-oxobutanoate + NADPH + H(+). The protein operates within amino-acid biosynthesis; L-isoleucine biosynthesis; L-isoleucine from 2-oxobutanoate: step 2/4. It participates in amino-acid biosynthesis; L-valine biosynthesis; L-valine from pyruvate: step 2/4. Its function is as follows. Involved in the biosynthesis of branched-chain amino acids (BCAA). Catalyzes an alkyl-migration followed by a ketol-acid reduction of (S)-2-acetolactate (S2AL) to yield (R)-2,3-dihydroxy-isovalerate. In the isomerase reaction, S2AL is rearranged via a Mg-dependent methyl migration to produce 3-hydroxy-3-methyl-2-ketobutyrate (HMKB). In the reductase reaction, this 2-ketoacid undergoes a metal-dependent reduction by NADPH to yield (R)-2,3-dihydroxy-isovalerate. This chain is Ketol-acid reductoisomerase (NADP(+)), found in Methylobacterium nodulans (strain LMG 21967 / CNCM I-2342 / ORS 2060).